A 426-amino-acid polypeptide reads, in one-letter code: UPF0229 protein Csal_0882 (426 aa).

Over residues 82–93 (FVEGDRLRRPGG) the composition is skewed to basic and acidic residues. Residues 82-109 (FVEGDRLRRPGGEGRGGSGEGSASNQGE) are disordered.

This sequence belongs to the UPF0229 family.

The sequence is that of UPF0229 protein Csal_0882 from Chromohalobacter salexigens (strain ATCC BAA-138 / DSM 3043 / CIP 106854 / NCIMB 13768 / 1H11).